A 207-amino-acid polypeptide reads, in one-letter code: Large ribosomal subunit protein uL4 (207 aa).

The interval 49-78 is disordered; it reads HAVKNRSAVSGGGRKPWRQKGTGRARQGSI.

It belongs to the universal ribosomal protein uL4 family. As to quaternary structure, part of the 50S ribosomal subunit.

Functionally, one of the primary rRNA binding proteins, this protein initially binds near the 5'-end of the 23S rRNA. It is important during the early stages of 50S assembly. It makes multiple contacts with different domains of the 23S rRNA in the assembled 50S subunit and ribosome. Forms part of the polypeptide exit tunnel. This is Large ribosomal subunit protein uL4 from Streptococcus pyogenes serotype M49 (strain NZ131).